Reading from the N-terminus, the 157-residue chain is MKTTLIVVGRTVEQHYITAINDYIERTKHFISFDMEVIPELKNTKSLTPEQQKEKEGELIAKALQPGDVVVLLDEHGKEMRSVEFARWMEKKLVNVNKRLVFIIGGPYGFSQKVYDAAHEKISMSKMTFSHQMIRLIFVEQIYRAMTILNGGPYHHE.

S-adenosyl-L-methionine is bound by residues leucine 73, glycine 105, and 124 to 129; that span reads MSKMTF.

The protein belongs to the RNA methyltransferase RlmH family. In terms of assembly, homodimer.

The protein localises to the cytoplasm. The catalysed reaction is pseudouridine(1915) in 23S rRNA + S-adenosyl-L-methionine = N(3)-methylpseudouridine(1915) in 23S rRNA + S-adenosyl-L-homocysteine + H(+). Functionally, specifically methylates the pseudouridine at position 1915 (m3Psi1915) in 23S rRNA. This chain is Ribosomal RNA large subunit methyltransferase H, found in Bacteroides fragilis (strain ATCC 25285 / DSM 2151 / CCUG 4856 / JCM 11019 / LMG 10263 / NCTC 9343 / Onslow / VPI 2553 / EN-2).